Consider the following 265-residue polypeptide: Uroporphyrinogen-III synthase (265 aa).

The protein belongs to the uroporphyrinogen-III synthase family. As to quaternary structure, monomer.

Its subcellular location is the cytoplasm. The protein localises to the cytosol. It carries out the reaction hydroxymethylbilane = uroporphyrinogen III + H2O. It participates in porphyrin-containing compound metabolism; protoporphyrin-IX biosynthesis; coproporphyrinogen-III from 5-aminolevulinate: step 3/4. Its function is as follows. Catalyzes cyclization of the linear tetrapyrrole, hydroxymethylbilane, to the macrocyclic uroporphyrinogen III, the branch point for the various sub-pathways leading to the wide diversity of porphyrins. Porphyrins act as cofactors for a multitude of enzymes that perform a variety of processes within the cell such as methionine synthesis (vitamin B12) or oxygen transport (heme). The polypeptide is Uroporphyrinogen-III synthase (Uros) (Mus musculus (Mouse)).